Reading from the N-terminus, the 101-residue chain is U-scoloptoxin(10)-Sm2a (101 aa).

The signal sequence occupies residues 1–23 (MNKSMIILCAVLFLTYIIEENEA).

It belongs to the scoloptoxin-10 family. Contains 3 disulfide bonds. As to expression, expressed by the venom gland.

The protein resides in the secreted. The sequence is that of U-scoloptoxin(10)-Sm2a from Scolopendra morsitans (Tanzanian blue ringleg centipede).